A 422-amino-acid chain; its full sequence is Synaptotagmin-15 (422 aa).

At 1-4 (MAEQ) the chain is on the extracellular side. The helical; Signal-anchor for type III membrane protein transmembrane segment at 5 to 27 (LALVIGCIIGGLLLLIGISCCLW) threads the bilayer. Topologically, residues 28-422 (KRLCTTFTYE…WHALCRPMEP (395 aa)) are cytoplasmic. C2 domains follow at residues 148 to 267 (CLGR…VIWR) and 279 to 400 (EFGD…EHWN).

Belongs to the synaptotagmin family. As to quaternary structure, homodimer.

It localises to the membrane. May be involved in the trafficking and exocytosis of secretory vesicles in non-neuronal tissues. This is Synaptotagmin-15 (Syt15) from Rattus norvegicus (Rat).